We begin with the raw amino-acid sequence, 342 residues long: MSIEKGKGRAMDIDLPLGSESTLPWVEKYRPANLEDVVSHKDIISTLEKFISSNRVPHMLFYGPPGTGKTSTILACARKIYGPNYRNQLMELNASDDRGIDAVREQIKNFASTRQIFASTFKMIILDEADAMTLAAQNALRRVIEKYTKNVRFCIICNYINKISPAIQSRCTRFRFQPLPPKEIEKTVDHVIQSEHCNIDPDAKMAVLRLSKGDMRKALNILQACHAAYDHIDVSAIYNCVGHPHPSDIDYFLKSIMNDEFVIAFNTISSIKQQKGLALQDILTCIFEALDELEIKPNAKIFILDQLATIEHRMSFGCSEKIQLSAMIASIKTGVDLAAKVN.

63–70 (GPPGTGKT) lines the ATP pocket.

Belongs to the activator 1 small subunits family. As to quaternary structure, heteropentamer of subunits rfc1, rfc2, rfc3, rfc4 and rfc5 that forms a complex (RFC) with PCNA in the presence of ATP. Two other complexes exist where rfc1 can be replaced by either ctf18 or elg1 to form the ctf18-RFC or the elg1-RFC complexes respectively.

The protein resides in the nucleus. Functionally, the elongation of primed DNA templates by DNA polymerase delta and epsilon requires the action of the accessory proteins PCNA and activator 1. Subunit 3 binds ATP. Also involved in replication and DNA damage checkpoint controls, probably functioning as a checkpoint sensor. This Schizosaccharomyces pombe (strain 972 / ATCC 24843) (Fission yeast) protein is Replication factor C subunit 3 (rfc3).